The sequence spans 330 residues: Peroxidase 42 (330 aa).

Residues 1–23 (MGGKGVMMVAILCLWALSATSEA) form the signal peptide. 4 disulfide bridges follow: Cys-40–Cys-119, Cys-73–Cys-78, Cys-125–Cys-323, and Cys-204–Cys-231. Residue His-71 is the Proton acceptor of the active site. Ca(2+) contacts are provided by Asp-72, Val-75, Asp-79, and Ser-81. Substrate is bound at residue Pro-167. N-linked (GlcNAc...) asparagine glycosylation is present at Asn-170. His-197 serves as a coordination point for heme b. Residue Ser-198 coordinates Ca(2+). Residues Asp-247, Thr-250, and Asp-255 each contribute to the Ca(2+) site.

Belongs to the peroxidase family. Classical plant (class III) peroxidase subfamily. Heme b is required as a cofactor. Requires Ca(2+) as cofactor. As to expression, constitutively expressed in the whole plant, with the highest expression in roots.

The protein resides in the secreted. The enzyme catalyses 2 a phenolic donor + H2O2 = 2 a phenolic radical donor + 2 H2O. Removal of H(2)O(2), oxidation of toxic reductants, biosynthesis and degradation of lignin, suberization, auxin catabolism, response to environmental stresses such as wounding, pathogen attack and oxidative stress. These functions might be dependent on each isozyme/isoform in each plant tissue. Functionally, might function as heat shock-like defense protein. This Arabidopsis thaliana (Mouse-ear cress) protein is Peroxidase 42 (PER42).